The primary structure comprises 113 residues: Transcriptional activator RamA (113 aa).

The HTH araC/xylS-type domain occupies 9 to 107 (DTIVEWIDDN…HQPPGAYRKE (99 aa)). 2 DNA-binding regions (H-T-H motif) span residues 26–47 (EDIARHAGYSKWHLQRLFLQYK) and 74–97 (VYEICLRYGFESQQTFTRIFTRTF).

In terms of biological role, probable transcriptional activator. The chain is Transcriptional activator RamA (ramA) from Enterobacter cloacae.